A 371-amino-acid polypeptide reads, in one-letter code: Aspartate-semialdehyde dehydrogenase (371 aa).

NADP(+)-binding positions include 9 to 12 (RGMV), 37 to 38 (TS), and Q73. A phosphate-binding site is contributed by R102. The active-site Acyl-thioester intermediate is the C135. Residue Q162 participates in substrate binding. Residues 165-166 (SG) and P193 each bind NADP(+). E241 contributes to the substrate binding site. K244 provides a ligand contact to phosphate. R268 contacts substrate. The Proton acceptor role is filled by H275. Q351 contributes to the NADP(+) binding site.

The protein belongs to the aspartate-semialdehyde dehydrogenase family. In terms of assembly, homodimer.

It catalyses the reaction L-aspartate 4-semialdehyde + phosphate + NADP(+) = 4-phospho-L-aspartate + NADPH + H(+). It functions in the pathway amino-acid biosynthesis; L-lysine biosynthesis via DAP pathway; (S)-tetrahydrodipicolinate from L-aspartate: step 2/4. Its pathway is amino-acid biosynthesis; L-methionine biosynthesis via de novo pathway; L-homoserine from L-aspartate: step 2/3. It participates in amino-acid biosynthesis; L-threonine biosynthesis; L-threonine from L-aspartate: step 2/5. In terms of biological role, catalyzes the NADPH-dependent formation of L-aspartate-semialdehyde (L-ASA) by the reductive dephosphorylation of L-aspartyl-4-phosphate. The chain is Aspartate-semialdehyde dehydrogenase from Neisseria meningitidis serogroup B (strain ATCC BAA-335 / MC58).